A 369-amino-acid polypeptide reads, in one-letter code: MTKNLYLGVMSGTSLDGVDLCVMDFAKNPPKLTACGFTPMPEDLRTDLSHLLKSGETSLQKLGEIDHRLGLLYAESIKRFLAEHQLSASDIQAIGCHGQTVWHSPNGNFPFTMQIGDMNLVAAHTGITTIADFRRKDMAVGGQGAPLVPAFHEGIFASPERLTVVLNIGGISNISVLAPQQPTIGYDVSVGNALMDSWIELHQAKRYDKNAEWAKTGTLIPALLDSLLDEPFFKLPAPKSTGRELFNLEWLAKKSANLTAYRPEDVQRTLAEFTVQSVVNELKTLESEKQCLLLACGGGARNPLLMQRFSELLPKWQVATTDEYGLDIDYVEAAAFAWLAYQRVHNLTNNLPSVTGAKEPVSLGVIYPK.

12–19 serves as a coordination point for ATP; that stretch reads GTSLDGVD.

Belongs to the anhydro-N-acetylmuramic acid kinase family.

It catalyses the reaction 1,6-anhydro-N-acetyl-beta-muramate + ATP + H2O = N-acetyl-D-muramate 6-phosphate + ADP + H(+). Its pathway is amino-sugar metabolism; 1,6-anhydro-N-acetylmuramate degradation. The protein operates within cell wall biogenesis; peptidoglycan recycling. Functionally, catalyzes the specific phosphorylation of 1,6-anhydro-N-acetylmuramic acid (anhMurNAc) with the simultaneous cleavage of the 1,6-anhydro ring, generating MurNAc-6-P. Is required for the utilization of anhMurNAc either imported from the medium or derived from its own cell wall murein, and thus plays a role in cell wall recycling. This is Anhydro-N-acetylmuramic acid kinase from Actinobacillus pleuropneumoniae serotype 5b (strain L20).